The chain runs to 520 residues: Anthranilate synthase component 1 (520 aa).

Residues S40 and 291–293 (PYM) contribute to the L-tryptophan site. Residue 328–329 (GT) participates in chorismate binding. Mg(2+) is bound at residue E361. Chorismate-binding positions include Y449, R469, 483–485 (GAG), and G485. E498 contributes to the Mg(2+) binding site.

This sequence belongs to the anthranilate synthase component I family. Heterotetramer consisting of two non-identical subunits: a beta subunit (TrpG) and a large alpha subunit (TrpE). It depends on Mg(2+) as a cofactor.

It carries out the reaction chorismate + L-glutamine = anthranilate + pyruvate + L-glutamate + H(+). The protein operates within amino-acid biosynthesis; L-tryptophan biosynthesis; L-tryptophan from chorismate: step 1/5. Feedback inhibited by tryptophan. Functionally, part of a heterotetrameric complex that catalyzes the two-step biosynthesis of anthranilate, an intermediate in the biosynthesis of L-tryptophan. In the first step, the glutamine-binding beta subunit (TrpG) of anthranilate synthase (AS) provides the glutamine amidotransferase activity which generates ammonia as a substrate that, along with chorismate, is used in the second step, catalyzed by the large alpha subunit of AS (TrpE) to produce anthranilate. In the absence of TrpG, TrpE can synthesize anthranilate directly from chorismate and high concentrations of ammonia. This is Anthranilate synthase component 1 (trpE) from Buchnera aphidicola subsp. Pemphigus spyrothecae.